A 111-amino-acid chain; its full sequence is WAP four-disulfide core domain protein 12 (111 aa).

Positions Met-1–Gly-23 are cleaved as a signal peptide. In terms of domain architecture, WAP spans Gly-27–Val-74. Disulfide bonds link Cys-34–Cys-62, Cys-41–Cys-66, Cys-49–Cys-61, and Cys-55–Cys-70. Positions Gly-80 to Lys-111 are disordered. Residues Pro-101–Lys-111 are compositionally biased toward polar residues.

The protein localises to the secreted. Antibacterial protein. Putative acid-stable proteinase inhibitor. The chain is WAP four-disulfide core domain protein 12 (WFDC12) from Macaca mulatta (Rhesus macaque).